Here is a 344-residue protein sequence, read N- to C-terminus: Nuclear distribution protein nudE-like 1-B (344 aa).

The stretch at 13-190 forms a coiled coil; that stretch reads KEEIVYWREL…LAVRERQTDG (178 aa). Disordered stretches follow at residues 186–209 and 325–344; these read RQTD…TDSS and PPGV…PLSV. Pro residues predominate over residues 333–344; that stretch reads PPSPPGLLPLSV.

This sequence belongs to the nudE family. Post-translationally, phosphorylated in mitosis.

It is found in the cytoplasm. The protein resides in the cytoskeleton. It localises to the microtubule organizing center. Its subcellular location is the centrosome. The protein localises to the spindle. Required for organization of the cellular microtubule array and microtubule anchoring at the centrosome. Positively regulates the activity of the minus-end directed microtubule motor protein dynein. May enhance dynein-mediated microtubule sliding by targeting dynein to the microtubule plus end. Positively regulates lysosome peripheral distribution and ruffled border formation in osteoclasts. The chain is Nuclear distribution protein nudE-like 1-B (ndel1-b) from Xenopus laevis (African clawed frog).